A 659-amino-acid chain; its full sequence is MDSTNLNKRPLLQYSLSSLGSQITKWSSSRPTSPVRKARSTENDFLSKQDTSSILPSINDDGGEQWYEKFKPNCLEQVAIHKRKLKDVQEALDAMFLPNAKHRILLLSGPSGCSKSTVIKELSKILVPKYRQNSNGTSFRSTPNEHKVTEFRGDCIVNDLPQMESFSEFLKGARYLVMSNLSLILIEDLPNVFHIDTRRRFQQLILQWLYSSEPLLPPLVICITECEIPENDNNYRKFGIDYTFSAETIMNKEILMHPRLKRIKFNPINSTLLKKHLKFICVQNMKMLKEKNKWNKRQEVIDYIAQETGDIRSAITTLQFWATSSGSLPISTRESTISYFHAIGKVIHGSHSTNNDNEMINNLFENSNNLLSKEDFKLGILENYNTFNKGEFSISDASSIVDCLSECDNMNGLPESNEYGLREVRKTFRNISKQGHNHGTVYFPREWKVRKLQNSFKVQAEDWLNVSLYKYNAVHSFRNITLEFGYYAPLIRKCQSYKKKYILYYLKNLPSGSSGPKQTMDKFSDIMKVENGIDVVDRIGGPIEALSVEDGLAPLMDNDSNNCDHLEDQKKERDRRLRMLIDQYERNVMMANDDLEDEETSFNDDPIVDSDSDNSNNIGNETFGRSDEDESLCEILSQRQPRKAPVISESLSDSDLEIL.

The interval 24–54 (TKWSSSRPTSPVRKARSTENDFLSKQDTSSI) is disordered. 109-116 (GPSGCSKS) serves as a coordination point for ATP. The segment covering 596–612 (EDEETSFNDDPIVDSDS) has biased composition (acidic residues). Positions 596–659 (EDEETSFNDD…SLSDSDLEIL (64 aa)) are disordered. Phosphoserine occurs at positions 652 and 654.

This sequence belongs to the rad17/RAD24 family. Component of the RAD24-RFC complex which consists of RAD14, RFC2, RFC3, RFC4 and RFC5 and associates with the checkpoint clamp DDC1:MEC3:RAD17 complex. RAD24 interacts with ECO1.

Its subcellular location is the nucleus. Functionally, participates in checkpoint pathways arrest of the cell cycle, a mechanism that allows the DNA repair pathways to act to restore the integrity of the DNA prior to DNA synthesis or separation of the replicated chromosomes. Regulates the DNA damage checkpoint pathway throughout the cell cycle, when associated with RCF5. Component of the RFC-like RAD24-RFC complex which loads the checkpoint clamp DDC1:MEC3:RAD17 complex and is involved in DNA repair pathways. During a clamp loading circle, the RFC:clamp complex binds to DNA and the recognition of the double-stranded/single-stranded junction stimulates ATP hydrolysis by RFC. The complex presumably provides bipartite ATP sites in which one subunit supplies a catalytic site for hydrolysis of ATP bound to the neighboring subunit. Dissociation of RFC from the clamp leaves the clamp encircling DNA. In Saccharomyces cerevisiae (strain ATCC 204508 / S288c) (Baker's yeast), this protein is Checkpoint protein RAD24 (RAD24).